A 392-amino-acid chain; its full sequence is uncharacterized protein (392 aa).

The J domain occupies T7–E76. At S108 the chain carries Phosphoserine.

This is an uncharacterized protein from Schizosaccharomyces pombe (strain 972 / ATCC 24843) (Fission yeast).